A 528-amino-acid chain; its full sequence is Extracellular serine/threonine protein CG31145 (528 aa).

Over Met-1–Arg-12 the chain is Cytoplasmic. A propeptide spanning residues Met-1–Gln-76 is cleaved from the precursor. The helical transmembrane segment at Leu-13–Gln-33 threads the bilayer. At Met-34–Ser-528 the chain is on the lumenal side. Residues Lys-77 to Asp-130 are disordered. N-linked (GlcNAc...) asparagine glycosylation is present at Asn-79. Low complexity predominate over residues Ala-86–Gly-107. Asn-173 carries N-linked (GlcNAc...) asparagine glycosylation. ATP is bound by residues Gln-220, Lys-236, and Glu-257. Residue Glu-257 coordinates Mn(2+). N-linked (GlcNAc...) asparagine glycosylation is present at Asn-286. Disulfide bonds link Cys-312–Cys-328 and Cys-317–Cys-321. Ala-339–Leu-342 lines the ATP pocket. 2 disulfides stabilise this stretch: Cys-376/Cys-450 and Cys-451/Cys-510. Asp-408 is an active-site residue. Position 413 (Glu-413) interacts with ATP. A glycan (N-linked (GlcNAc...) asparagine) is linked at Asn-420. Asp-428 contacts ATP. Position 428 (Asp-428) interacts with Mn(2+).

The protein belongs to the FAM20 family. The cofactor is Mn(2+). In embryos, prominently expressed in midline glia, salivary gland, intestine and dorsal vessel (heart). Not associated with biomineralization.

Its subcellular location is the golgi apparatus membrane. It is found in the secreted. The enzyme catalyses L-seryl-[protein] + ATP = O-phospho-L-seryl-[protein] + ADP + H(+). It carries out the reaction L-threonyl-[protein] + ATP = O-phospho-L-threonyl-[protein] + ADP + H(+). Golgi serine/threonine protein kinase that phosphorylates secretory pathway proteins within Ser-x-Glu/pSer motifs. The protein is Extracellular serine/threonine protein CG31145 of Drosophila melanogaster (Fruit fly).